We begin with the raw amino-acid sequence, 229 residues long: MYDISGWKHVFKLDPNKELSDEHLEMICESGTDAVIVGGSDGVTIDNVLHMLVSIRRYAVPCVLEVSDVEAITPGFDFYYIPSVLNSRKVEWVTGVHHEALKEFGDIMDWDEIFMEGYCVLNPEAKVAQLTDAKCDVTEDDVIAYARLADKLLRLPIFYLEYSGTYGDVELVKNVKAELKQAKLYYGGGISNAEQAEEMAQHADTVVVGNIIYDDIKAALKTVKAVKGE.

Sn-glycerol 1-phosphate is bound at residue K12. Mg(2+) contacts are provided by D14 and S40. Residues 159 to 164 (YLEYSG), G189, and 209 to 210 (GN) contribute to the sn-glycerol 1-phosphate site.

Belongs to the GGGP/HepGP synthase family. Group I subfamily. As to quaternary structure, homodimer. Mg(2+) serves as cofactor.

The catalysed reaction is sn-glycerol 1-phosphate + all-trans-heptaprenyl diphosphate = 3-heptaprenyl-sn-glycero-1-phosphate + diphosphate. It functions in the pathway membrane lipid metabolism; glycerophospholipid metabolism. Prenyltransferase that catalyzes in vivo the transfer of the heptaprenyl moiety of heptaprenyl pyrophosphate (HepPP; 35 carbon atoms) to the C3 hydroxyl of sn-glycerol-1-phosphate (G1P), producing heptaprenylglyceryl phosphate (HepGP). This reaction is an ether-bond-formation step in the biosynthesis of archaea-type G1P-based membrane lipids found in Bacillales. This is Heptaprenylglyceryl phosphate synthase from Bacillus thuringiensis (strain Al Hakam).